We begin with the raw amino-acid sequence, 634 residues long: Chaperone protein HtpG (634 aa).

The a; substrate-binding stretch occupies residues 1 to 345 (MEHQQNHTFS…SNDLPLNVSR (345 aa)). The segment at 346–562 (EILQDTRVTA…NDDMSTQMAK (217 aa)) is b. The segment at 563–634 (LMAQMGQPVP…VGRINKLLLA (72 aa)) is c.

The protein belongs to the heat shock protein 90 family. In terms of assembly, homodimer.

Its subcellular location is the cytoplasm. Molecular chaperone. Has ATPase activity. The protein is Chaperone protein HtpG of Psychromonas ingrahamii (strain DSM 17664 / CCUG 51855 / 37).